We begin with the raw amino-acid sequence, 167 residues long: MARTSAIDYGRAAKYFLLLDFIKGFGLGMKYFFAPKHTVNYPHEKGPLSPRFRGEHALRRYPNGEERCIACKLCEAVCPAQAITIDAEPREDGSRRTTRYDIDMTKCIYCGFCQEACPVDAIVEGPNFEFSTETREELFYNKDRLLENGARWEAEIARNLELDAPYR.

4Fe-4S ferredoxin-type domains lie at 58 to 88 (LRRYPNGEERCIACKLCEAVCPAQAITIDAE) and 98 to 127 (TRYDIDMTKCIYCGFCQEACPVDAIVEGPN). Residues Cys68, Cys71, Cys74, Cys78, Cys107, Cys110, Cys113, and Cys117 each coordinate [4Fe-4S] cluster.

The protein belongs to the complex I 23 kDa subunit family. As to quaternary structure, NDH-1 is composed of 14 different subunits. Subunits NuoA, H, J, K, L, M, N constitute the membrane sector of the complex. [4Fe-4S] cluster serves as cofactor.

It localises to the cell inner membrane. The enzyme catalyses a quinone + NADH + 5 H(+)(in) = a quinol + NAD(+) + 4 H(+)(out). NDH-1 shuttles electrons from NADH, via FMN and iron-sulfur (Fe-S) centers, to quinones in the respiratory chain. The immediate electron acceptor for the enzyme in this species is believed to be ubiquinone. Couples the redox reaction to proton translocation (for every two electrons transferred, four hydrogen ions are translocated across the cytoplasmic membrane), and thus conserves the redox energy in a proton gradient. This is NADH-quinone oxidoreductase subunit I 1 from Cereibacter sphaeroides (strain ATCC 17029 / ATH 2.4.9) (Rhodobacter sphaeroides).